We begin with the raw amino-acid sequence, 335 residues long: Ketol-acid reductoisomerase (NADP(+)) 2 (335 aa).

The KARI N-terminal Rossmann domain maps to M1 to T180. NADP(+) is bound by residues Y24–Q27, R47, S51, and D81–Q84. H106 is a catalytic residue. G132 is an NADP(+) binding site. In terms of domain architecture, KARI C-terminal knotted spans T181 to I326. Mg(2+) is bound by residues D189, E193, E225, and E229. S250 contributes to the substrate binding site.

It belongs to the ketol-acid reductoisomerase family. The cofactor is Mg(2+).

It carries out the reaction (2R)-2,3-dihydroxy-3-methylbutanoate + NADP(+) = (2S)-2-acetolactate + NADPH + H(+). The catalysed reaction is (2R,3R)-2,3-dihydroxy-3-methylpentanoate + NADP(+) = (S)-2-ethyl-2-hydroxy-3-oxobutanoate + NADPH + H(+). It functions in the pathway amino-acid biosynthesis; L-isoleucine biosynthesis; L-isoleucine from 2-oxobutanoate: step 2/4. Its pathway is amino-acid biosynthesis; L-valine biosynthesis; L-valine from pyruvate: step 2/4. In terms of biological role, involved in the biosynthesis of branched-chain amino acids (BCAA). Catalyzes an alkyl-migration followed by a ketol-acid reduction of (S)-2-acetolactate (S2AL) to yield (R)-2,3-dihydroxy-isovalerate. In the isomerase reaction, S2AL is rearranged via a Mg-dependent methyl migration to produce 3-hydroxy-3-methyl-2-ketobutyrate (HMKB). In the reductase reaction, this 2-ketoacid undergoes a metal-dependent reduction by NADPH to yield (R)-2,3-dihydroxy-isovalerate. The polypeptide is Ketol-acid reductoisomerase (NADP(+)) 2 (Bacillus thuringiensis subsp. konkukian (strain 97-27)).